We begin with the raw amino-acid sequence, 262 residues long: Light-harvesting complex-like protein 3 isotype 1, chloroplastic (262 aa).

The transit peptide at 1–39 (MALFSPPISSSSLQNPNFIPKFSFSLLSSNRFSLLSVTR) directs the protein to the chloroplast. A run of 2 helical transmembrane segments spans residues 180-200 (AAMI…VGLV) and 202-222 (QMGN…VLFI).

As to quaternary structure, interacts with GGR. Forms homodimer, and heterodimer with LIL3.2. As to expression, expressed in photosynthetically active tissues (at protein level).

The protein localises to the plastid. The protein resides in the chloroplast thylakoid membrane. Functionally, light-harvesting-like protein required for biosynthesis of phytylated chlorophylls and alpha-tocopherol in green seedlings. Functions by anchoring geranylgeranyl reductase (GGR) in the thylakoid membrane, leading to the stabilization of GGR activity. Binds chlorophyll a in the thylakoid membrane. Plays a role in the regulation of chlorophyll biosynthesis under light stress and under standard growth conditions. This chain is Light-harvesting complex-like protein 3 isotype 1, chloroplastic (LIL3.1), found in Arabidopsis thaliana (Mouse-ear cress).